We begin with the raw amino-acid sequence, 276 residues long: MEGASRHGLAAARATLDEATATAPGAPRPVDAGRIAEDLRAVAELLAREPAVRRALTDPGAPVAARTELVTRLFGTQLAPASLRIVHTAVGARWSRPFDLQYALLELSVEALLVEAERDGALEEVEDELFRFGRILDQNAPLALALTDPAAPAAVKDRLLTRLLAGRAHPVTVRLVQQAAADRIHGDVERRLAEFSRIAAARRGRVVAIVRTAVPLSSEVVARLGAAISRYFGRQIQLQVDLDPDILGGVVVQVGGEVVDGSVLRRFVAARRALLR.

This sequence belongs to the ATPase delta chain family. As to quaternary structure, F-type ATPases have 2 components, F(1) - the catalytic core - and F(0) - the membrane proton channel. F(1) has five subunits: alpha(3), beta(3), gamma(1), delta(1), epsilon(1). F(0) has three main subunits: a(1), b(2) and c(10-14). The alpha and beta chains form an alternating ring which encloses part of the gamma chain. F(1) is attached to F(0) by a central stalk formed by the gamma and epsilon chains, while a peripheral stalk is formed by the delta and b chains.

It is found in the cell membrane. Functionally, f(1)F(0) ATP synthase produces ATP from ADP in the presence of a proton or sodium gradient. F-type ATPases consist of two structural domains, F(1) containing the extramembraneous catalytic core and F(0) containing the membrane proton channel, linked together by a central stalk and a peripheral stalk. During catalysis, ATP synthesis in the catalytic domain of F(1) is coupled via a rotary mechanism of the central stalk subunits to proton translocation. This protein is part of the stalk that links CF(0) to CF(1). It either transmits conformational changes from CF(0) to CF(1) or is implicated in proton conduction. The polypeptide is ATP synthase subunit delta (Frankia casuarinae (strain DSM 45818 / CECT 9043 / HFP020203 / CcI3)).